A 722-amino-acid polypeptide reads, in one-letter code: uncharacterized protein (722 aa).

This is an uncharacterized protein from Treponema pallidum (strain Nichols).